A 93-amino-acid chain; its full sequence is Small ribosomal subunit protein uS19 (93 aa).

Belongs to the universal ribosomal protein uS19 family.

Its function is as follows. Protein S19 forms a complex with S13 that binds strongly to the 16S ribosomal RNA. This Tropheryma whipplei (strain TW08/27) (Whipple's bacillus) protein is Small ribosomal subunit protein uS19.